The following is an 875-amino-acid chain: Alanine--tRNA ligase (875 aa).

Residues His564, His568, Cys666, and His670 each contribute to the Zn(2+) site.

The protein belongs to the class-II aminoacyl-tRNA synthetase family. In terms of assembly, homotetramer. Zn(2+) is required as a cofactor.

It localises to the cytoplasm. It carries out the reaction tRNA(Ala) + L-alanine + ATP = L-alanyl-tRNA(Ala) + AMP + diphosphate. Catalyzes the attachment of alanine to tRNA(Ala) in a two-step reaction: alanine is first activated by ATP to form Ala-AMP and then transferred to the acceptor end of tRNA(Ala). Also edits incorrectly charged Ser-tRNA(Ala) and Gly-tRNA(Ala) via its editing domain. This chain is Alanine--tRNA ligase, found in Yersinia enterocolitica serotype O:8 / biotype 1B (strain NCTC 13174 / 8081).